A 529-amino-acid polypeptide reads, in one-letter code: BAR/IMD domain-containing adapter protein 2-like 2 (529 aa).

An IMD domain is found at 1 to 239 (MAPEMDQFYR…HSPGLLGPAL (239 aa)). 2 disordered regions span residues 221–327 (EASR…GGAR) and 403–510 (TSMS…TNPF). A phosphoserine mark is found at Ser231, Ser272, and Ser302. Over residues 299 to 313 (SASSLYSGSAQSSRS) the composition is skewed to low complexity. Residues 324 to 387 (GGARRVRALV…PEAYVKALEE (64 aa)) enclose the SH3 domain. Composition is skewed to low complexity over residues 403-413 (TSMSPMTPMNP) and 452-462 (RSRTPSRVPSR). Positions 463 to 472 (APSPAPPPLP) are enriched in pro residues. Ser478 and Ser481 each carry phosphoserine.

In terms of tissue distribution, expressed in the epithelial layer of the intestine (at protein level).

The protein localises to the cell membrane. It localises to the cell junction. It is found in the cytoplasmic vesicle membrane. Phosphoinositides-binding protein that induces the formation of planar or gently curved membrane structures. Binds to phosphoinositides, including to phosphatidylinositol 4,5-bisphosphate (PtdIns(4,5)P2) headgroups. There seems to be no clear preference for a specific phosphoinositide. The chain is BAR/IMD domain-containing adapter protein 2-like 2 (BAIAP2L2) from Homo sapiens (Human).